The chain runs to 123 residues: Small ribosomal subunit protein uS12 (123 aa).

D89 carries the 3-methylthioaspartic acid modification.

Belongs to the universal ribosomal protein uS12 family. As to quaternary structure, part of the 30S ribosomal subunit. Contacts proteins S8 and S17. May interact with IF1 in the 30S initiation complex.

Its function is as follows. With S4 and S5 plays an important role in translational accuracy. Interacts with and stabilizes bases of the 16S rRNA that are involved in tRNA selection in the A site and with the mRNA backbone. Located at the interface of the 30S and 50S subunits, it traverses the body of the 30S subunit contacting proteins on the other side and probably holding the rRNA structure together. The combined cluster of proteins S8, S12 and S17 appears to hold together the shoulder and platform of the 30S subunit. This chain is Small ribosomal subunit protein uS12, found in Methylorubrum extorquens (strain PA1) (Methylobacterium extorquens).